A 109-amino-acid chain; its full sequence is Large ribosomal subunit protein uL24 (109 aa).

Positions 1-24 (MANVTTDIKRNDTVAVTSGKDKGK) are disordered.

Belongs to the universal ribosomal protein uL24 family. As to quaternary structure, part of the 50S ribosomal subunit.

Its function is as follows. One of two assembly initiator proteins, it binds directly to the 5'-end of the 23S rRNA, where it nucleates assembly of the 50S subunit. Functionally, one of the proteins that surrounds the polypeptide exit tunnel on the outside of the subunit. This chain is Large ribosomal subunit protein uL24, found in Koribacter versatilis (strain Ellin345).